We begin with the raw amino-acid sequence, 142 residues long: Large ribosomal subunit protein uL13 (142 aa).

The protein belongs to the universal ribosomal protein uL13 family. In terms of assembly, part of the 50S ribosomal subunit.

This protein is one of the early assembly proteins of the 50S ribosomal subunit, although it is not seen to bind rRNA by itself. It is important during the early stages of 50S assembly. The polypeptide is Large ribosomal subunit protein uL13 (Mannheimia succiniciproducens (strain KCTC 0769BP / MBEL55E)).